A 552-amino-acid polypeptide reads, in one-letter code: Chaperonin GroEL (552 aa).

ATP is bound by residues 29–32, Lys-50, 86–90, Gly-420, and Asp-501; these read TAGP and DGTTT.

The protein belongs to the chaperonin (HSP60) family. As to quaternary structure, forms a cylinder of 14 subunits composed of two heptameric rings stacked back-to-back. Interacts with the co-chaperonin GroES.

It localises to the cytoplasm. It carries out the reaction ATP + H2O + a folded polypeptide = ADP + phosphate + an unfolded polypeptide.. In terms of biological role, together with its co-chaperonin GroES, plays an essential role in assisting protein folding. The GroEL-GroES system forms a nano-cage that allows encapsulation of the non-native substrate proteins and provides a physical environment optimized to promote and accelerate protein folding. In Wolbachia pipientis subsp. Culex pipiens (strain wPip), this protein is Chaperonin GroEL.